Reading from the N-terminus, the 381-residue chain is MTETQSLELAKALISRPSVTPDDRDCQKLLVERLYKIGFAAEELHFGDTKNIWLRRGTKVPVVCFAGHTDVVPTGPVEKWDSPPFEPTERDGRLYGRGAADMKTSIACFVTACERFVAEHPDHQGSIALLITSDEEGDALDGTTKVVDVLKARGELIDYCIVGEPTAVDKLGDMIKNGRRGSLSGNLTVKGKQGHIAYPHLAINPVHTFAPALLELTQEVWDEGNKYFPPTSFQISNINGGTGATNVIPGELNVKFNFRFSTESTEAGLKQRVHAILDKHGVQYDLQWSCSGQPFLTQAGKLTDVARAAIAETCGIEAELSTTGGTSDGRFIKAIAKELIELGPSNATIHQINENVRLNDIPKLSAVYEGILARLLAGNAV.

Position 68 (histidine 68) interacts with Zn(2+). Aspartate 70 is an active-site residue. Aspartate 101 is a binding site for Zn(2+). The active-site Proton acceptor is glutamate 135. Zn(2+)-binding residues include glutamate 136, glutamate 164, and histidine 350.

This sequence belongs to the peptidase M20A family. DapE subfamily. Homodimer. The cofactor is Zn(2+). Co(2+) is required as a cofactor.

The catalysed reaction is N-succinyl-(2S,6S)-2,6-diaminopimelate + H2O = (2S,6S)-2,6-diaminopimelate + succinate. It participates in amino-acid biosynthesis; L-lysine biosynthesis via DAP pathway; LL-2,6-diaminopimelate from (S)-tetrahydrodipicolinate (succinylase route): step 3/3. Functionally, catalyzes the hydrolysis of N-succinyl-L,L-diaminopimelic acid (SDAP), forming succinate and LL-2,6-diaminopimelate (DAP), an intermediate involved in the bacterial biosynthesis of lysine and meso-diaminopimelic acid, an essential component of bacterial cell walls. The protein is Succinyl-diaminopimelate desuccinylase of Neisseria meningitidis serogroup C (strain 053442).